The sequence spans 318 residues: CRISPR-associated protein Cas7/Csa2 1 (318 aa).

This sequence belongs to the CRISPR-associated protein Cas7/Cst2/DevR family. Subtype I-a/Apern subfamily. Part of the aCascade ribonucleoprotein complex, minimally composed of Csa2 and Cas5a, which binds crRNA. Other possible components of aCascade in strain P1 are Cas6b (SSO1437) and Csa5 (SSO1443), while SSO1399, Cas5b (SSO1400) and SSO1401 have sometimes been seen weakly associated. Csa2 is probably the major RNA-binding subunit. The Csa2-Cas5a-crRNA complex also binds target DNA homologous to crRNA, probably forming an R-loop. Purified aCascade forms a filament about 6 nm in width.

Functionally, CRISPR (clustered regularly interspaced short palindromic repeat) is an adaptive immune system that provides protection against mobile genetic elements (viruses, transposable elements and conjugative plasmids). CRISPR clusters contain spacers, sequences complementary to antecedent mobile elements, and target invading nucleic acids. CRISPR clusters are transcribed and processed into CRISPR RNA (crRNA). This Saccharolobus solfataricus (strain ATCC 35092 / DSM 1617 / JCM 11322 / P2) (Sulfolobus solfataricus) protein is CRISPR-associated protein Cas7/Csa2 1 (cas7a).